Consider the following 107-residue polypeptide: MADTIQVTPQMLRSTANDIQANMEQAMGIAKGYLANQENVMNPATWSGTGVVASHMTATEITNELNKVLTGGTRLAEGLVQAAALMEGHEADSQTAFQALFGASHGS.

Belongs to the WXG100 family. CFP-10 subfamily.

It is found in the secreted. The sequence is that of ESAT-6-like protein EsxD from Mycobacterium tuberculosis (strain ATCC 25618 / H37Rv).